The chain runs to 78 residues: MEKKVFVVEGYAKKGSLKFRFKKYFIALKKEDAIFYTYSILGSNHKLKKTQIHIERVYELDPEKDKDKLPDKRLLAFF.

Belongs to the eukaryotic ribosomal protein eL20 family. Part of the 50S ribosomal subunit. Binds 23S rRNA.

This is Large ribosomal subunit protein eL20 from Nanoarchaeum equitans (strain Kin4-M).